Reading from the N-terminus, the 93-residue chain is Small ribosomal subunit protein uS19m (93 aa).

It belongs to the universal ribosomal protein uS19 family.

Its subcellular location is the mitochondrion. This Marchantia polymorpha (Common liverwort) protein is Small ribosomal subunit protein uS19m (RPS19).